A 185-amino-acid chain; its full sequence is Pyridoxal 5'-phosphate synthase subunit PdxT (185 aa).

Residue 46–48 (GES) participates in L-glutamine binding. The Nucleophile role is filled by C78. L-glutamine-binding positions include R106 and 132–133 (IR). Residues H168 and E170 each act as charge relay system in the active site.

The protein belongs to the glutaminase PdxT/SNO family. As to quaternary structure, in the presence of PdxS, forms a dodecamer of heterodimers. Only shows activity in the heterodimer.

It carries out the reaction aldehydo-D-ribose 5-phosphate + D-glyceraldehyde 3-phosphate + L-glutamine = pyridoxal 5'-phosphate + L-glutamate + phosphate + 3 H2O + H(+). The catalysed reaction is L-glutamine + H2O = L-glutamate + NH4(+). The protein operates within cofactor biosynthesis; pyridoxal 5'-phosphate biosynthesis. Functionally, catalyzes the hydrolysis of glutamine to glutamate and ammonia as part of the biosynthesis of pyridoxal 5'-phosphate. The resulting ammonia molecule is channeled to the active site of PdxS. The chain is Pyridoxal 5'-phosphate synthase subunit PdxT from Corynebacterium diphtheriae (strain ATCC 700971 / NCTC 13129 / Biotype gravis).